We begin with the raw amino-acid sequence, 452 residues long: 23S rRNA (uracil(1939)-C(5))-methyltransferase RlmD (452 aa).

Residues 1–23 (MSRKKSNGGLRFQPAGGNRATQI) are disordered. The TRAM domain occupies 22-80 (QIPVGKKQRLLIERVAGDGRGIAFIEGRTWFVSGALGGEEVEARVLGARGKVVEARLER). Residues Cys93, Cys99, Cys102, and Cys181 each coordinate [4Fe-4S] cluster. The S-adenosyl-L-methionine site is built by Gln285, Phe314, Asn319, Glu335, Asp362, and Asp383. Cys409 serves as the catalytic Nucleophile.

It belongs to the class I-like SAM-binding methyltransferase superfamily. RNA M5U methyltransferase family. RlmD subfamily.

It carries out the reaction uridine(1939) in 23S rRNA + S-adenosyl-L-methionine = 5-methyluridine(1939) in 23S rRNA + S-adenosyl-L-homocysteine + H(+). In terms of biological role, catalyzes the formation of 5-methyl-uridine at position 1939 (m5U1939) in 23S rRNA. The polypeptide is 23S rRNA (uracil(1939)-C(5))-methyltransferase RlmD (Pseudomonas entomophila (strain L48)).